A 215-amino-acid chain; its full sequence is Histone-like protein 18C (215 aa).

Residues 140 to 215 (CTPRKENKCS…PKSSKPKCSM (76 aa)) form a disordered region. Basic residues-rich tracts occupy residues 149–190 (SKPR…RPRK) and 197–215 (AKAKPRCLKPKSSKPKCSM).

Not known. Encoded in the intron of cAMP-dependent protein kinase regulatory chain type I. This Drosophila melanogaster (Fruit fly) protein is Histone-like protein 18C (Mst77F).